Consider the following 251-residue polypeptide: Probable transcriptional regulatory protein Caul_0780 (251 aa).

This sequence belongs to the TACO1 family.

It is found in the cytoplasm. In Caulobacter sp. (strain K31), this protein is Probable transcriptional regulatory protein Caul_0780.